Reading from the N-terminus, the 458-residue chain is Bifunctional protein GlmU (458 aa).

Residues 1–229 (MNKFAIVLAA…FDESLGVNDR (229 aa)) are pyrophosphorylase. UDP-N-acetyl-alpha-D-glucosamine is bound by residues 8 to 11 (LAAG), Lys-22, Gln-72, and 77 to 78 (GT). Residue Asp-102 coordinates Mg(2+). UDP-N-acetyl-alpha-D-glucosamine is bound by residues Gly-139, Glu-154, Asn-169, and Asn-227. A Mg(2+)-binding site is contributed by Asn-227. The linker stretch occupies residues 230–250 (VALSQAEATMRKRINHEHMVN). Positions 251–458 (GVTLIDPATT…AKKMPHYRGQ (208 aa)) are N-acetyltransferase. 2 residues coordinate UDP-N-acetyl-alpha-D-glucosamine: Arg-332 and Lys-350. His-362 (proton acceptor) is an active-site residue. Positions 365 and 376 each coordinate UDP-N-acetyl-alpha-D-glucosamine. Residues Ala-379, Ser-404, Ala-422, and Arg-439 each coordinate acetyl-CoA.

It in the N-terminal section; belongs to the N-acetylglucosamine-1-phosphate uridyltransferase family. The protein in the C-terminal section; belongs to the transferase hexapeptide repeat family. As to quaternary structure, homotrimer. The cofactor is Mg(2+).

The protein localises to the cytoplasm. The catalysed reaction is alpha-D-glucosamine 1-phosphate + acetyl-CoA = N-acetyl-alpha-D-glucosamine 1-phosphate + CoA + H(+). The enzyme catalyses N-acetyl-alpha-D-glucosamine 1-phosphate + UTP + H(+) = UDP-N-acetyl-alpha-D-glucosamine + diphosphate. It participates in nucleotide-sugar biosynthesis; UDP-N-acetyl-alpha-D-glucosamine biosynthesis; N-acetyl-alpha-D-glucosamine 1-phosphate from alpha-D-glucosamine 6-phosphate (route II): step 2/2. It functions in the pathway nucleotide-sugar biosynthesis; UDP-N-acetyl-alpha-D-glucosamine biosynthesis; UDP-N-acetyl-alpha-D-glucosamine from N-acetyl-alpha-D-glucosamine 1-phosphate: step 1/1. Its pathway is bacterial outer membrane biogenesis; LPS lipid A biosynthesis. Its function is as follows. Catalyzes the last two sequential reactions in the de novo biosynthetic pathway for UDP-N-acetylglucosamine (UDP-GlcNAc). The C-terminal domain catalyzes the transfer of acetyl group from acetyl coenzyme A to glucosamine-1-phosphate (GlcN-1-P) to produce N-acetylglucosamine-1-phosphate (GlcNAc-1-P), which is converted into UDP-GlcNAc by the transfer of uridine 5-monophosphate (from uridine 5-triphosphate), a reaction catalyzed by the N-terminal domain. This is Bifunctional protein GlmU from Lactococcus lactis subsp. cremoris (strain MG1363).